We begin with the raw amino-acid sequence, 979 residues long: UPF0182 protein MRA_0066 (979 aa).

The next 7 membrane-spanning stretches (helical) occupy residues 19–39 (LVTAGMGMLALLLFGPRLVDI), 63–83 (LAIVAAVALVVAGIVLAALLL), 114–134 (LFGWGIAVTLGVVCGLIASFD), 174–194 (WLFVAVVLAFLASLLTHYLFG), 211–231 (VQLAVFAGAVVLLKAVAYWLD), 260–280 (KLVLVAIAVLCAVSFFTAIFL), and 288–308 (MAAALLVLSAILVGGLWPLLM). A disordered region spans residues 898–948 (GTGRVATARGGDAASAPPPGAGGPAPPQAVPPPRTTQPPAAPPRGPDVPPA). Residues 913 to 946 (APPPGAGGPAPPQAVPPPRTTQPPAAPPRGPDVP) show a composition bias toward pro residues.

This sequence belongs to the UPF0182 family.

The protein localises to the cell membrane. The polypeptide is UPF0182 protein MRA_0066 (Mycobacterium tuberculosis (strain ATCC 25177 / H37Ra)).